We begin with the raw amino-acid sequence, 531 residues long: Efflux pump terG (531 aa).

Over residues 1–11 (MSSSTLEGQET) the composition is skewed to polar residues. A disordered region spans residues 1-27 (MSSSTLEGQETASHHSKNSPSRHGDDG). The next 13 membrane-spanning stretches (helical) occupy residues 86–106 (GKLS…ILIG), 117–137 (AIFV…GVSV), 145–165 (ILAR…ALAI), 179–199 (FAWF…FGPL), 207–227 (WIYW…IVAI), 249–269 (IDLL…FAWN), 280–300 (YVYV…YVEL), 319–339 (FVFG…FYVI), 351–371 (IQMA…ALIV), 380–400 (ASSI…LMAL), 402–422 (PVHS…TFAM), 447–467 (SVIM…AGTI), and 488–508 (TLWF…IFLL).

This sequence belongs to the major facilitator superfamily.

It is found in the cell membrane. In terms of biological role, efflux pump that might be required for efficient secretion of terrein or other secondary metabolies produced by the terrein genne cluster. This chain is Efflux pump terG, found in Aspergillus terreus (strain NIH 2624 / FGSC A1156).